The chain runs to 322 residues: Ferrochelatase (322 aa).

The Fe cation site is built by histidine 194 and glutamate 275.

The protein belongs to the ferrochelatase family.

It is found in the cytoplasm. The catalysed reaction is heme b + 2 H(+) = protoporphyrin IX + Fe(2+). Its pathway is porphyrin-containing compound metabolism; protoheme biosynthesis; protoheme from protoporphyrin-IX: step 1/1. Functionally, catalyzes the ferrous insertion into protoporphyrin IX. This is Ferrochelatase from Proteus mirabilis (strain HI4320).